We begin with the raw amino-acid sequence, 231 residues long: Chromosome partition protein MukE (231 aa).

The segment at 204-231 is disordered; it reads TPEPSQQSLLENPTAEYDEEQTEWEDEA. The segment covering 219–231 has biased composition (acidic residues); it reads EYDEEQTEWEDEA.

Belongs to the MukE family. In terms of assembly, interacts, and probably forms a ternary complex, with MukF and MukB. The complex formation is stimulated by calcium or magnesium.

It localises to the cytoplasm. The protein localises to the nucleoid. Its function is as follows. Involved in chromosome condensation, segregation and cell cycle progression. May participate in facilitating chromosome segregation by condensation DNA from both sides of a centrally located replisome during cell division. Probably acts via its interaction with MukB and MukF. This Vibrio cholerae serotype O1 (strain ATCC 39315 / El Tor Inaba N16961) protein is Chromosome partition protein MukE.